The chain runs to 384 residues: Sensor-like histidine kinase SenX3 (384 aa).

The Histidine kinase domain maps to 153–369 (NVSHELKTPV…TFTLSIPEYP (217 aa)). Position 156 is a phosphohistidine; by autocatalysis (histidine 156). Positions 360-384 (TFTLSIPEYPDPESHSDEREDQRER) are disordered. Positions 371–384 (PESHSDEREDQRER) are enriched in basic and acidic residues.

In terms of processing, autophosphorylated.

The protein resides in the cell membrane. The catalysed reaction is ATP + protein L-histidine = ADP + protein N-phospho-L-histidine.. In terms of biological role, member of the two-component regulatory system SenX3/RegX3 involved in stress response. The system is involved in phosphate starvation response. Probably exhibits a dual role as a phosphatase or a phosphodonor for the response regulator RegX3, depending upon phosphate availability. When environmental phosphate is abundant, SenX3 is required to maintain RegX3 in an unphosphorylated state, where it is unable to bind target DNA. Under conditions of phosphate limitation, SenX3 autophosphorylates and then transfers the phosphate group to RegX3. Probably does not itself sense phosphate concentrations, which may be relayed to SenX3 by the PstSCAB phosphate transporter system. This is Sensor-like histidine kinase SenX3 from Mycolicibacterium smegmatis (strain ATCC 700084 / mc(2)155) (Mycobacterium smegmatis).